The following is a 310-amino-acid chain: HTH-type transcriptional regulator CbbR (310 aa).

The HTH lysR-type domain occupies 7-64 (ITLKQLRALVAVAGSASLTGGATRLGLTPPAIHSQIRNLEEAFGVPLLHRPPETGSFT). The H-T-H motif DNA-binding region spans 24-43 (LTGGATRLGLTPPAIHSQIR).

It belongs to the LysR transcriptional regulatory family.

Its function is as follows. Transcriptional activator for the cbb operon for RuBisCO and other Calvin cycle genes. The polypeptide is HTH-type transcriptional regulator CbbR (cbbR) (Cereibacter sphaeroides (Rhodobacter sphaeroides)).